A 203-amino-acid polypeptide reads, in one-letter code: MASNTLIESTSVRRSPAEHLAEAMAQGSTAGTVQLREIAFATQVGVRAVPGSGGFAALAEAVGTGLPQQVGVVAGSVEGTAVLWLGPDEFLAIAPEGAELAAELVAALGDEPGQVLDLSANRSVLELSGPAAPLVLRKSCPADLHPRAFGVNLAITTTLANIPVLLWRTGEQSWYILPRASFTEHTVHWLIDAMSEFASEPVA.

Belongs to the SoxG family. In terms of assembly, heterotetramer composed of subunits alpha (SoxA), beta (SoxB), gamma (SoxG) and delta (SoxD).

It is found in the cytoplasm. It carries out the reaction sarcosine + (6S)-5,6,7,8-tetrahydrofolate + O2 = (6R)-5,10-methylene-5,6,7,8-tetrahydrofolate + glycine + H2O2. It catalyses the reaction sarcosine + O2 + H2O = formaldehyde + glycine + H2O2. Its function is as follows. In the presence of tetrahydrofolate, catalyzes the oxidative demethylation of sarcosine to yield glycine, 5,10-methylenetetrahydrofolate and hydrogen peroxide. In the absence of tetrahydrofolate, catalyzes the oxidative demethylation of sarcosine to yield glycine, formaldehyde and hydrogen peroxide. This chain is Sarcosine oxidase subunit gamma, found in Corynebacterium sp. (strain P-1).